Consider the following 97-residue polypeptide: MTCFLVRDLLPLYLEGDCKRETEHVIEEHLKMCSSCRDMYDTMAEPFELESEQAVEEAYLPEEELRFKQRYYGLLIMKAACWFGAAVAMMLIIKLLI.

3 residues coordinate Zn(2+): H29, C33, and C36. A helical membrane pass occupies residues Y71–I93.

This sequence belongs to the zinc-associated anti-sigma factor (ZAS) superfamily. Requires Zn(2+) as cofactor.

Its subcellular location is the cell membrane. Its function is as follows. Anti-sigma factor for YlaC. This Bacillus subtilis (strain 168) protein is Anti-sigma-YlaC factor YlaD (ylaD).